Reading from the N-terminus, the 160-residue chain is General odorant-binding protein 2 (160 aa).

An N-terminal signal peptide occupies residues Met-1–Gly-19. 3 disulfide bridges follow: Cys-38–Cys-73, Cys-69–Cys-127, and Cys-116–Cys-136.

The protein belongs to the PBP/GOBP family. As to expression, antenna.

In terms of biological role, present in the aqueous fluid surrounding olfactory sensory dendrites and are thought to aid in the capture and transport of hydrophobic odorants into and through this fluid. This Antheraea pernyi (Chinese oak silk moth) protein is General odorant-binding protein 2.